The sequence spans 552 residues: Membrane protein insertase YidC (552 aa).

A helical membrane pass occupies residues 3–23; sequence IKRTVLWVIFFMSAVMLFDNW. A disordered region spans residues 36–59; the sequence is SATPTRTVGSAAPGTTTPGTQPAD. Low complexity predominate over residues 42–59; sequence TVGSAAPGTTTPGTQPAD. A run of 3 helical transmembrane segments spans residues 364–384, 430–450, and 504–524; these read WGWSIVLLTLLIKAVFFPLSA, FGGCLPVVIQIPVFISLYWVL, and MMFMPIAFSVMFFFFPAGLVL.

It belongs to the OXA1/ALB3/YidC family. Type 1 subfamily. Interacts with the Sec translocase complex via SecD. Specifically interacts with transmembrane segments of nascent integral membrane proteins during membrane integration.

Its subcellular location is the cell inner membrane. Required for the insertion and/or proper folding and/or complex formation of integral membrane proteins into the membrane. Involved in integration of membrane proteins that insert both dependently and independently of the Sec translocase complex, as well as at least some lipoproteins. Aids folding of multispanning membrane proteins. This chain is Membrane protein insertase YidC, found in Paraburkholderia xenovorans (strain LB400).